Reading from the N-terminus, the 119-residue chain is MTRVPRGYIARRRRAKMRSFASNFRGAHLRLNRMITQQVRRAFVSSHRDRVRQKRDFRRLWISRINAATRIHKVFDNYSKLIHNLYKKELILNRKILAQVAVLNSNNLYTISNKIKIIN.

This sequence belongs to the bacterial ribosomal protein bL20 family.

It localises to the plastid. It is found in the chloroplast. Functionally, binds directly to 23S ribosomal RNA and is necessary for the in vitro assembly process of the 50S ribosomal subunit. It is not involved in the protein synthesizing functions of that subunit. The protein is Large ribosomal subunit protein bL20c (rpl20) of Oryza sativa (Rice).